The following is a 294-amino-acid chain: Cytidine deaminase (294 aa).

CMP/dCMP-type deaminase domains lie at 48–168 (DEDA…FGPK) and 186–294 (LTGD…VLLG). Residue 89 to 91 (NME) participates in substrate binding. His102 is a Zn(2+) binding site. The Proton donor role is filled by Glu104. Residues Cys129 and Cys132 each contribute to the Zn(2+) site.

It belongs to the cytidine and deoxycytidylate deaminase family. Homodimer. It depends on Zn(2+) as a cofactor.

The catalysed reaction is cytidine + H2O + H(+) = uridine + NH4(+). The enzyme catalyses 2'-deoxycytidine + H2O + H(+) = 2'-deoxyuridine + NH4(+). This enzyme scavenges exogenous and endogenous cytidine and 2'-deoxycytidine for UMP synthesis. This chain is Cytidine deaminase, found in Salmonella paratyphi A (strain ATCC 9150 / SARB42).